Here is a 360-residue protein sequence, read N- to C-terminus: DNA polymerase IV (360 aa).

The UmuC domain occupies 9 to 191 (IMHLDIDAFY…LNINKIPYIG (183 aa)). 2 residues coordinate Mg(2+): aspartate 13 and aspartate 108. Glutamate 109 is an active-site residue.

This sequence belongs to the DNA polymerase type-Y family. In terms of assembly, monomer. The cofactor is Mg(2+).

It localises to the cytoplasm. It carries out the reaction DNA(n) + a 2'-deoxyribonucleoside 5'-triphosphate = DNA(n+1) + diphosphate. In terms of biological role, poorly processive, error-prone DNA polymerase involved in untargeted mutagenesis. Copies undamaged DNA at stalled replication forks, which arise in vivo from mismatched or misaligned primer ends. These misaligned primers can be extended by PolIV. Exhibits no 3'-5' exonuclease (proofreading) activity. May be involved in translesional synthesis, in conjunction with the beta clamp from PolIII. The sequence is that of DNA polymerase IV from Ureaplasma parvum serovar 3 (strain ATCC 27815 / 27 / NCTC 11736).